The sequence spans 358 residues: B3 domain-containing protein Os12g0592300 (358 aa).

Residues 25-122 (RIRFFRLMTG…SFDVLIFDAS (98 aa)) constitute a DNA-binding region (TF-B3 1). The interval 148 to 215 (YHLSDSEDTS…EKSDDDDEHA (68 aa)) is disordered. The segment covering 156–181 (TSTPSTFLVGSPHKASTSKKLNGKTK) has biased composition (polar residues). The segment covering 203-215 (IEEEKSDDDDEHA) has biased composition (acidic residues). The TF-B3 2 DNA-binding region spans 252 to 350 (FVTVLQAPQI…TMTVHVIGKV (99 aa)).

It localises to the nucleus. The chain is B3 domain-containing protein Os12g0592300 from Oryza sativa subsp. japonica (Rice).